Consider the following 248-residue polypeptide: Small ribosomal subunit protein uS2 (248 aa).

This sequence belongs to the universal ribosomal protein uS2 family.

The chain is Small ribosomal subunit protein uS2 from Dechloromonas aromatica (strain RCB).